The sequence spans 325 residues: Exogastrula-inducing polypeptide (325 aa).

The signal sequence occupies residues 1–19 (MKVSLVLLIAVFGLAMVAA). A propeptide spanning residues 20–45 (EETLESKLQMALKSLLQENEELNLEG) is cleaved from the precursor. 2 EGF-like domains span residues 48-91 (TKGG…SSCY) and 107-154 (TVAR…GGCS). Cystine bridges form between cysteine 52-cysteine 65, cysteine 59-cysteine 75, cysteine 77-cysteine 90, cysteine 111-cysteine 124, cysteine 118-cysteine 138, and cysteine 140-cysteine 153. A propeptide spanning residues 160 to 177 (ELEYLSYVARDVEMEMLA) is cleaved from the precursor. The EGF-like 3 domain maps to 180–226 (SVYQCNRDTNSCDGFGKCEKSTFGRTTGQYICNCDDGYRNNAYGGCS). 3 disulfide bridges follow: cysteine 184/cysteine 197, cysteine 191/cysteine 211, and cysteine 213/cysteine 225. Positions 232-249 (EIEYLSMIARDQELEMQA) are excised as a propeptide. Positions 252–298 (SLPQCNRDTNYCDGFGQCVKSTFGRTTGQYICSCNDGYENNLYGGCS) constitute an EGF-like 4 domain. Cystine bridges form between cysteine 256-cysteine 269, cysteine 263-cysteine 283, and cysteine 285-cysteine 297. Positions 313–325 (MEILRSLANLLEE) are excised as a propeptide.

The protein localises to the secreted. The protein resides in the extracellular space. Its subcellular location is the extracellular matrix. The EGIP peptides are factors effective to extrude the archenteron toward outside of embryos. May have a role in the induction of gastrulation. The sequence is that of Exogastrula-inducing polypeptide from Heliocidaris crassispina (Sea urchin).